We begin with the raw amino-acid sequence, 352 residues long: Protein RecA (352 aa).

An ATP-binding site is contributed by 67–74 (GPESSGKT).

The protein belongs to the RecA family.

The protein localises to the cytoplasm. In terms of biological role, can catalyze the hydrolysis of ATP in the presence of single-stranded DNA, the ATP-dependent uptake of single-stranded DNA by duplex DNA, and the ATP-dependent hybridization of homologous single-stranded DNAs. It interacts with LexA causing its activation and leading to its autocatalytic cleavage. This Klebsiella pneumoniae subsp. pneumoniae (strain ATCC 700721 / MGH 78578) protein is Protein RecA.